Reading from the N-terminus, the 133-residue chain is U6 snRNA-associated Sm-like protein LSm1 (133 aa).

Positions 5 to 80 (PGTASLIEDI…VVLLGEIDLE (76 aa)) constitute a Sm domain. Position 123 is a phosphoserine (Ser123). Position 129 is a phosphothreonine (Thr129).

The protein belongs to the snRNP Sm proteins family. Interacts with SLBP; interaction with SLBP occurs when histone mRNA is being rapidly degraded during the S phase. LSm subunits form a heteromer with a donut shape.

The protein localises to the cytoplasm. The protein resides in the P-body. In terms of biological role, plays a role in the degradation of histone mRNAs, the only eukaryotic mRNAs that are not polyadenylated. Probably also part of an LSm subunits-containing complex involved in the general process of mRNA degradation. In Bos taurus (Bovine), this protein is U6 snRNA-associated Sm-like protein LSm1 (LSM1).